The chain runs to 458 residues: Phosphoglucosamine mutase (458 aa).

The active-site Phosphoserine intermediate is the Ser108. The Mg(2+) site is built by Ser108, Asp247, Asp249, and Asp251. At Ser108 the chain carries Phosphoserine.

It belongs to the phosphohexose mutase family. Mg(2+) is required as a cofactor. Post-translationally, activated by phosphorylation.

It carries out the reaction alpha-D-glucosamine 1-phosphate = D-glucosamine 6-phosphate. Functionally, catalyzes the conversion of glucosamine-6-phosphate to glucosamine-1-phosphate. In Nitrosomonas eutropha (strain DSM 101675 / C91 / Nm57), this protein is Phosphoglucosamine mutase.